The primary structure comprises 735 residues: Glycogen [starch] synthase, muscle (735 aa).

A Phosphoserine; by AMPK and PKA modification is found at S8. Phosphoserine is present on S11. Residue K39 participates in UDP binding. Residues H205 and R211 each coordinate UDP-alpha-D-glucose. Residues H291, E292, Q294, H297, and K301 each coordinate alpha-D-glucose 6-phosphate. R331 is a UDP binding site. R331 serves as a coordination point for UDP-alpha-D-glucose. S412 bears the Phosphoserine mark. H501 provides a ligand contact to alpha-D-glucose 6-phosphate. Positions 510, 512, and 513 each coordinate UDP-alpha-D-glucose. Position 515 (T515) interacts with UDP. R582 and R586 together coordinate alpha-D-glucose 6-phosphate. Positions 629–735 (DATQGYRYPR…PASSLGEERN (107 aa)) are disordered. Position 641 is a phosphoserine; by DYRK2, GSK3-alpha, GSK3-beta and PASK (S641). Phosphoserine; by GSK3-alpha and GSK3-beta is present on residues S645 and S649. S652 carries the post-translational modification Phosphoserine. S653 carries the phosphoserine; by GSK3-alpha and GSK3-beta modification. The residue at position 657 (S657) is a Phosphoserine; by CK2. A compositionally biased stretch (acidic residues) spans 658 to 681 (EDEEEPRDGLPEEDGERYDEDEEA). Over residues 682–695 (AKDRRNIRAPEWPR) the composition is skewed to basic and acidic residues. Position 698 is a phosphoserine (S698). The segment covering 698 to 735 (SCTSSSGGSKRSNSVDTSSLSTPSEPLSPASSLGEERN) has biased composition (low complexity). T700 is modified (phosphothreonine). Phosphoserine is present on residues S709 and S711. The residue at position 719 (T719) is a Phosphothreonine. Residues S725 and S729 each carry the phosphoserine modification.

The protein belongs to the glycosyltransferase 3 family. As to quaternary structure, part of the GYS1-GYG1 complex, a heterooctamer composed of a tetramer of GYS1 and 2 dimers of GYG1, where each GYS1 protomer binds to one GYG1 subunit (via GYG1 C-terminus); the GYS1 tetramer may dissociate from GYG1 dimers to continue glycogen polymerization on its own. Post-translationally, phosphorylation at Ser-8 is required for modification of Ser-11 by casein kinase I. In terms of processing, phosphorylated at Ser-641 by PASK, leading to inactivation; phosphorylation by PASK is inhibited by glycogen. Dephosphorylation at Ser-641 and Ser-645 by PP1 activates the enzyme. Phosphorylation at Ser-8 by AMPK inactivates the enzyme activity. Phosphorylated at Ser-641 by DYRK2, leading to inactivation. Primed phosphorylation at Ser-657 (site 5) by CSNK2A1 and CSNK2A2 is required for inhibitory phosphorylation at Ser-641 (site 3a), Ser-645 (site 3b), Ser-649 (site 3c) and Ser-653 (site 4) by GSK3A and GSK3B.

It carries out the reaction [(1-&gt;4)-alpha-D-glucosyl](n) + UDP-alpha-D-glucose = [(1-&gt;4)-alpha-D-glucosyl](n+1) + UDP + H(+). The protein operates within glycan biosynthesis; glycogen biosynthesis. Its activity is regulated as follows. Allosteric activation by glucose-6-phosphate. Phosphorylation reduces the activity towards UDP-glucose. When in the non-phosphorylated state, glycogen synthase does not require glucose-6-phosphate as an allosteric activator; when phosphorylated it does. Functionally, glycogen synthase participates in the glycogen biosynthetic process along with glycogenin and glycogen branching enzyme. Extends the primer composed of a few glucose units formed by glycogenin by adding new glucose units to it. In this context, glycogen synthase transfers the glycosyl residue from UDP-Glc to the non-reducing end of alpha-1,4-glucan. The sequence is that of Glycogen [starch] synthase, muscle from Oryctolagus cuniculus (Rabbit).